Reading from the N-terminus, the 102-residue chain is Citrate lyase acyl carrier protein (102 aa).

Serine 14 bears the O-(phosphoribosyl dephospho-coenzyme A)serine mark.

It belongs to the CitD family. As to quaternary structure, oligomer with a subunit composition of (alpha,beta,gamma)6.

It is found in the cytoplasm. Its function is as follows. Covalent carrier of the coenzyme of citrate lyase. The chain is Citrate lyase acyl carrier protein from Streptococcus equi subsp. zooepidemicus (strain H70).